The chain runs to 199 residues: Recombination protein RecR (199 aa).

The C4-type zinc finger occupies cysteine 57–cysteine 72. Residues serine 80–alanine 176 enclose the Toprim domain.

The protein belongs to the RecR family.

In terms of biological role, may play a role in DNA repair. It seems to be involved in an RecBC-independent recombinational process of DNA repair. It may act with RecF and RecO. This is Recombination protein RecR from Lactobacillus johnsonii (strain CNCM I-12250 / La1 / NCC 533).